The sequence spans 342 residues: Paired box protein Pax-9 (342 aa).

Positions 4-130 (AFGEVNQLGG…SSISRILRNK (127 aa)) form a DNA-binding region, paired. The tract at residues 7–63 (EVNQLGGVFVNGRPLPNAIRLRIVELAQLGIRPCDISRQLRVSHGCVSKILARYNET) is PAI subdomain. Residues 82-130 (TVVKHIRTYKQRDPGIFAWEIRDRLLADGVCDKYNVPSVSSISRILRNK) are RED subdomain. Residues 168-189 (AAAAKVPTPPGVPAIPGSVALP) form an interaction with KDM5B region.

As to quaternary structure, interacts with KDM5B. In the embryo, expressed in pharyngeal pouches and derivatives, developing vertebral column, tail, head and limbs.

The protein resides in the nucleus. In terms of biological role, transcription factor required for normal development of thymus, parathyroid glands, ultimobranchial bodies, teeth, skeletal elements of skull and larynx as well as distal limbs. In Mus musculus (Mouse), this protein is Paired box protein Pax-9 (Pax9).